Consider the following 293-residue polypeptide: Probable E3 ubiquitin-protein ligase RNF144A-B (293 aa).

The segment at Pro-16–Leu-237 is TRIAD supradomain. Zn(2+) contacts are provided by Cys-20, Cys-23, Cys-43, Cys-46, Cys-111, Cys-116, Cys-135, Cys-138, Cys-143, Cys-146, His-151, Cys-156, Cys-186, and Cys-189. The RING-type 1 zinc finger occupies Cys-20–Cys-70. The IBR-type zinc-finger motif lies at Gln-91–Cys-156. The segment at Cys-186–Cys-215 adopts an RING-type 2; atypical zinc-finger fold. The active site involves Cys-199. Zn(2+) is bound by residues Cys-204, Cys-207, Cys-212, Cys-215, His-227, and Cys-233. Residues Val-251–Leu-271 traverse the membrane as a helical segment.

It belongs to the RBR family. RNF144 subfamily.

The protein resides in the membrane. It carries out the reaction [E2 ubiquitin-conjugating enzyme]-S-ubiquitinyl-L-cysteine + [acceptor protein]-L-lysine = [E2 ubiquitin-conjugating enzyme]-L-cysteine + [acceptor protein]-N(6)-ubiquitinyl-L-lysine.. It participates in protein modification; protein ubiquitination. Its function is as follows. E3 ubiquitin-protein ligase which accepts ubiquitin from E2 ubiquitin-conjugating enzymes ube2l3 and ube2l6 in the form of a thioester and then directly transfers the ubiquitin to targeted substrates. The chain is Probable E3 ubiquitin-protein ligase RNF144A-B (rnf144ab) from Danio rerio (Zebrafish).